A 156-amino-acid chain; its full sequence is Probable cyclic pyranopterin monophosphate synthase (156 aa).

Substrate-binding positions include 73-75 (LCH) and 109-110 (ME). Residue Asp-124 is part of the active site.

It belongs to the MoaC family. As to quaternary structure, homohexamer; trimer of dimers.

The enzyme catalyses (8S)-3',8-cyclo-7,8-dihydroguanosine 5'-triphosphate = cyclic pyranopterin phosphate + diphosphate. The protein operates within cofactor biosynthesis; molybdopterin biosynthesis. Its function is as follows. Catalyzes the conversion of (8S)-3',8-cyclo-7,8-dihydroguanosine 5'-triphosphate to cyclic pyranopterin monophosphate (cPMP). This Pyrococcus furiosus (strain ATCC 43587 / DSM 3638 / JCM 8422 / Vc1) protein is Probable cyclic pyranopterin monophosphate synthase.